Consider the following 101-residue polypeptide: NAD(P)H-quinone oxidoreductase subunit 4L, chloroplastic (101 aa).

3 consecutive transmembrane segments (helical) span residues 2-22 (MLEH…YGLI), 32-52 (MCLE…SDLF), and 61-81 (IFSI…PAIV).

Belongs to the complex I subunit 4L family. As to quaternary structure, NDH is composed of at least 16 different subunits, 5 of which are encoded in the nucleus.

The protein localises to the plastid. It localises to the chloroplast thylakoid membrane. The enzyme catalyses a plastoquinone + NADH + (n+1) H(+)(in) = a plastoquinol + NAD(+) + n H(+)(out). It carries out the reaction a plastoquinone + NADPH + (n+1) H(+)(in) = a plastoquinol + NADP(+) + n H(+)(out). Its function is as follows. NDH shuttles electrons from NAD(P)H:plastoquinone, via FMN and iron-sulfur (Fe-S) centers, to quinones in the photosynthetic chain and possibly in a chloroplast respiratory chain. The immediate electron acceptor for the enzyme in this species is believed to be plastoquinone. Couples the redox reaction to proton translocation, and thus conserves the redox energy in a proton gradient. The sequence is that of NAD(P)H-quinone oxidoreductase subunit 4L, chloroplastic from Ceratophyllum demersum (Rigid hornwort).